A 419-amino-acid chain; its full sequence is Protein FAM217A (419 aa).

Disordered regions lie at residues 1-60 (MGRK…LENP), 96-119 (KGST…DLSE), 236-299 (SSSK…SRAL), and 317-382 (KNSK…RTKK). A compositionally biased stretch (low complexity) spans 7 to 19 (ESCSSSLHVSSIS). The span at 236–251 (SSSKAIATKAKAPKIP) shows a compositional bias: low complexity. Composition is skewed to polar residues over residues 252–261 (ETSTLQTSGV) and 271–281 (NSGSGKPEQNV). Composition is skewed to low complexity over residues 282 to 296 (SKWS…KSNS) and 334 to 345 (PTTTTQATQPMA).

Belongs to the FAM217 family.

The protein is Protein FAM217A (Fam217a) of Mus musculus (Mouse).